We begin with the raw amino-acid sequence, 133 residues long: Ribonuclease P protein component (133 aa).

Belongs to the RnpA family. Consists of a catalytic RNA component (M1 or rnpB) and a protein subunit.

The enzyme catalyses Endonucleolytic cleavage of RNA, removing 5'-extranucleotides from tRNA precursor.. Functionally, RNaseP catalyzes the removal of the 5'-leader sequence from pre-tRNA to produce the mature 5'-terminus. It can also cleave other RNA substrates such as 4.5S RNA. The protein component plays an auxiliary but essential role in vivo by binding to the 5'-leader sequence and broadening the substrate specificity of the ribozyme. This Corynebacterium efficiens (strain DSM 44549 / YS-314 / AJ 12310 / JCM 11189 / NBRC 100395) protein is Ribonuclease P protein component.